Reading from the N-terminus, the 66-residue chain is Photosystem II reaction center protein H (66 aa).

A helical membrane pass occupies residues 27-47; it reads GAVPIMTVIGLLLLVFLVILL.

This sequence belongs to the PsbH family. PSII is composed of 1 copy each of membrane proteins PsbA, PsbB, PsbC, PsbD, PsbE, PsbF, PsbH, PsbI, PsbJ, PsbK, PsbL, PsbM, PsbT, PsbX, PsbY, Psb30/Ycf12, peripheral proteins PsbO, CyanoQ (PsbQ), PsbU, PsbV and a large number of cofactors. It forms dimeric complexes.

It localises to the cellular thylakoid membrane. Its function is as follows. One of the components of the core complex of photosystem II (PSII), required for its stability and/or assembly. PSII is a light-driven water:plastoquinone oxidoreductase that uses light energy to abstract electrons from H(2)O, generating O(2) and a proton gradient subsequently used for ATP formation. It consists of a core antenna complex that captures photons, and an electron transfer chain that converts photonic excitation into a charge separation. The polypeptide is Photosystem II reaction center protein H (Prochlorococcus marinus (strain MIT 9515)).